The sequence spans 309 residues: LWNYILKSITRIMDYIIYRFLLIVVILATIINAQNYGVNLPITGSMDTAYANSTQSEPFLTSTLCLYYPVEASNEIADTEWKDTLSQLFLTKGWPTGSVYLKEYADIAAFSVEPQLYCDYNLVLMKYDSTQELDMSELADLILNEWLCNPMDITLYYYQQTDEANKWISMGSSCTVKVCPLNTQTLGIGCLITNPDTFETVATTEKLVITDVVDGVSHKLNVTTATCTIRNCKKLGPKENVAVIQVGGANILDITADPTTTPQTERMMAIIWKKWWQVVYPVVDYVNQIIQTMSKRSRSLNSSAFYYRV.

Positions 1-33 (LWNYILKSITRIMDYIIYRFLLIVVILATIINA) are cleaved as a signal peptide. A glycan (N-linked (GlcNAc...) asparagine; by host) is linked at N52. 4 disulfide bridges follow: C65–C118, C148–C232, C174–C227, and C179–C190. Residue D78 participates in Ca(2+) binding. The segment at 148–150 (CNP) is CNP motif; interaction with ITGAV/ITGB3. Positions 160, 189, 197, 199, 211, 212, and 214 each coordinate Ca(2+). An N-linked (GlcNAc...) asparagine; by host glycan is attached at N221. D284 contributes to the Ca(2+) binding site. A glycan (N-linked (GlcNAc...) asparagine; by host) is linked at N301.

Belongs to the rotavirus VP7 family. Homotrimer; disulfide-linked. 2 Ca(2+) ions bound at each subunit interface in the trimer hold the trimer together. Interacts with the intermediate capsid protein VP6. Interacts with the outer capsid protein VP5*. Post-translationally, intramolecular disulfide bonds. N-glycosylated. In terms of processing, the N-terminus is blocked possibly by pyroglutamic acid.

The protein resides in the virion. It localises to the host endoplasmic reticulum lumen. Calcium-binding protein that interacts with rotavirus cell receptors once the initial attachment by VP4 has been achieved. Rotavirus attachment and entry into the host cell probably involves multiple sequential contacts between the outer capsid proteins VP4 and VP7, and the cell receptors. Following entry into the host cell, low intracellular or intravesicular Ca(2+) concentration probably causes the calcium-stabilized VP7 trimers to dissociate from the virion. This step is probably necessary for the membrane-disrupting entry step and the release of VP4, which is locked onto the virion by VP7. The sequence is that of Outer capsid glycoprotein VP7 from Bos taurus (Bovine).